Reading from the N-terminus, the 382-residue chain is Alpha-methylacyl-CoA racemase (382 aa).

Substrate contacts are provided by residues Arg36 and Leu55–Lys58. An N6-acetyllysine modification is found at Lys58. Lys87 bears the N6-acetyllysine; alternate mark. Lys87 is subject to N6-succinyllysine; alternate. Gly121–Tyr126 serves as a coordination point for substrate. The active-site Proton acceptor is the His122. The active-site Proton donor is Asp152. Position 268 is an N6-succinyllysine (Lys268). The Microbody targeting signal signature appears at Ala380–Leu382.

It belongs to the CoA-transferase III family. As to quaternary structure, monomer.

Its subcellular location is the peroxisome. It localises to the mitochondrion. It carries out the reaction a (2S)-2-methylacyl-CoA = a (2R)-2-methylacyl-CoA. The catalysed reaction is (25R)-3alpha,7alpha,12alpha-trihydroxy-5beta-cholestan-26-oyl-CoA = (25S)-3alpha,7alpha,12alpha-trihydroxy-5beta-cholestan-26-oyl-CoA. The enzyme catalyses (2R,6)-dimethylheptanoyl-CoA = (2S,6)-dimethylheptanoyl-CoA. It functions in the pathway lipid metabolism; bile acid biosynthesis. The protein operates within lipid metabolism; fatty acid metabolism. Its function is as follows. Catalyzes the interconversion of (R)- and (S)-stereoisomers of alpha-methyl-branched-chain fatty acyl-CoA esters. Acts only on coenzyme A thioesters, not on free fatty acids, and accepts as substrates a wide range of alpha-methylacyl-CoAs, including pristanoyl-CoA, trihydroxycoprostanoyl-CoA (an intermediate in bile acid synthesis), and arylpropionic acids like the anti-inflammatory drug ibuprofen (2-(4-isobutylphenyl)propionic acid) but neither 3-methyl-branched nor linear-chain acyl-CoAs. This Homo sapiens (Human) protein is Alpha-methylacyl-CoA racemase (AMACR).